Reading from the N-terminus, the 142-residue chain is Hemoglobin subunit alpha-4 (142 aa).

Positions 2–142 constitute a Globin domain; the sequence is VLSAADKSNV…VSTVLTSKYR (141 aa). His-59 contributes to the O2 binding site. His-88 serves as a coordination point for heme b.

Belongs to the globin family. Heterotetramer of two alpha chains and two beta chains. In terms of tissue distribution, red blood cells.

Its function is as follows. Involved in oxygen transport from the lung to the various peripheral tissues. The polypeptide is Hemoglobin subunit alpha-4 (Bubalus bubalis (Domestic water buffalo)).